The primary structure comprises 149 residues: 4-hydroxyphenylacetate 3-monooxygenase, reductase component (149 aa).

FAD is bound at residue 27 to 34; that stretch reads ERGMTATA. NAD(+) is bound at residue serine 37. FAD is bound by residues 48-50, 54-55, and histidine 80; these read AVS and KL. Residues histidine 116 and 137 to 140 contribute to the NAD(+) site; that span reads YFQR.

Belongs to the non-flavoprotein flavin reductase family. HpaC subfamily. Homodimer. 4-HPA 3-monooxygenase consists of a reductase component HpaC and an oxygenase component HpaB.

The catalysed reaction is a reduced flavin + NAD(+) = an oxidized flavin + NADH + 2 H(+). It participates in aromatic compound metabolism; 4-hydroxyphenylacetate degradation; pyruvate and succinate semialdehyde from 4-hydroxyphenylacetate: step 1/7. Catalyzes the reduction of free flavins (FMN, FAD and riboflavin) by NADH. Subsequently, the reduced flavins diffuse to the large HpaB component. It utilizes NADH, but not NADPH as an electron donor, and both FAD and FMN as electron acceptors. This chain is 4-hydroxyphenylacetate 3-monooxygenase, reductase component, found in Thermus thermophilus (strain ATCC 27634 / DSM 579 / HB8).